A 445-amino-acid polypeptide reads, in one-letter code: Adenylyltransferase and sulfurtransferase MOCS3 (445 aa).

The interval 49–70 (LPPSAAAEVEPTGSPSSSSSAA) is disordered. Residues G106, D127, 134 to 138 (DNLHR), K151, and 170 to 171 (NN) contribute to the ATP site. Residues C211 and C214 each contribute to the Zn(2+) site. The active-site Glycyl thioester intermediate; for adenylyltransferase activity is C228. Positions 286 and 289 each coordinate Zn(2+). Residues 342–443 (SGRPHLLVDV…WAKEVDPSFL (102 aa)) form the Rhodanese domain. C403 acts as the Cysteine persulfide intermediate; for sulfurtransferase activity in catalysis.

The protein in the N-terminal section; belongs to the HesA/MoeB/ThiF family. UBA4 subfamily. Zn(2+) is required as a cofactor.

It is found in the cytoplasm. The protein resides in the cytosol. It carries out the reaction [molybdopterin-synthase sulfur-carrier protein]-C-terminal Gly-Gly + ATP + H(+) = [molybdopterin-synthase sulfur-carrier protein]-C-terminal Gly-Gly-AMP + diphosphate. The catalysed reaction is [molybdopterin-synthase sulfur-carrier protein]-C-terminal Gly-Gly-AMP + S-sulfanyl-L-cysteinyl-[cysteine desulfurase] + AH2 = [molybdopterin-synthase sulfur-carrier protein]-C-terminal-Gly-aminoethanethioate + L-cysteinyl-[cysteine desulfurase] + A + AMP + 2 H(+). The protein operates within tRNA modification; 5-methoxycarbonylmethyl-2-thiouridine-tRNA biosynthesis. Its pathway is cofactor biosynthesis; molybdopterin biosynthesis. Functionally, plays a central role in 2-thiolation of mcm(5)S(2)U at tRNA wobble positions of cytosolic tRNA(Lys), tRNA(Glu) and tRNA(Gln). Also essential during biosynthesis of the molybdenum cofactor. Acts by mediating the C-terminal thiocarboxylation of sulfur carriers URM1 and MOCS2A. Its N-terminus first activates URM1 and MOCS2A as acyl-adenylates (-COAMP), then the persulfide sulfur on the catalytic cysteine is transferred to URM1 and MOCS2A to form thiocarboxylation (-COSH) of their C-terminus. The reaction probably involves hydrogen sulfide that is generated from the persulfide intermediate and that acts as a nucleophile towards URM1 and MOCS2A. Subsequently, a transient disulfide bond is formed. Does not use thiosulfate as sulfur donor; NFS1 probably acting as a sulfur donor for thiocarboxylation reactions. This Oryza sativa subsp. japonica (Rice) protein is Adenylyltransferase and sulfurtransferase MOCS3.